A 277-amino-acid chain; its full sequence is 3-methyl-2-oxobutanoate hydroxymethyltransferase (277 aa).

The Mg(2+) site is built by aspartate 43 and aspartate 82. Residues aspartate 43–serine 44, aspartate 82, and lysine 112 contribute to the 3-methyl-2-oxobutanoate site. Residue glutamate 114 participates in Mg(2+) binding. Glutamate 181 functions as the Proton acceptor in the catalytic mechanism.

The protein belongs to the PanB family. Homodecamer; pentamer of dimers. Mg(2+) serves as cofactor.

The protein resides in the cytoplasm. The catalysed reaction is 3-methyl-2-oxobutanoate + (6R)-5,10-methylene-5,6,7,8-tetrahydrofolate + H2O = 2-dehydropantoate + (6S)-5,6,7,8-tetrahydrofolate. The protein operates within cofactor biosynthesis; (R)-pantothenate biosynthesis; (R)-pantoate from 3-methyl-2-oxobutanoate: step 1/2. In terms of biological role, catalyzes the reversible reaction in which hydroxymethyl group from 5,10-methylenetetrahydrofolate is transferred onto alpha-ketoisovalerate to form ketopantoate. The protein is 3-methyl-2-oxobutanoate hydroxymethyltransferase of Bacillus subtilis (strain 168).